Here is a 389-residue protein sequence, read N- to C-terminus: MHSEREESWRAELSALRAHDLWRELQVLQPAPERGPPTFVGTRGEPLLSFASNDYLGLSAESALRDAAIAEIQQSGVGAGAAPLLGGERPAHAVLANALARWLGVEAALLFGSGYLANLGVISTLVGRGDRVYADRLNHASLVDGVRLSGARLHRYRHGDMTHLAQWLERGGRGQAWIITDGVFSMDGDIAPLPELATLAQQYGAGIILDEAHAFGVLGTEGQGTAAHWNMDIHGVDVIMGTLGKAFGVYGAFVAGSQDVVDLLRNRARSFIYHTALPSALAAAALVALDLLRHGDARRERLTQHRQHLRAQVPDAPWLASETPIQGLLLGDARRALTVSAQLRRAGLYCPAVRPPTVPADSARLRITLSAAHSHDDIELLATTLREVL.

Residue R23 coordinates substrate. Position 114–115 (114–115 (GY)) interacts with pyridoxal 5'-phosphate. H139 contributes to the substrate binding site. Residues S185, H213, and T242 each coordinate pyridoxal 5'-phosphate. N6-(pyridoxal phosphate)lysine is present on K245. Residue T357 coordinates substrate.

The protein belongs to the class-II pyridoxal-phosphate-dependent aminotransferase family. BioF subfamily. In terms of assembly, homodimer. Pyridoxal 5'-phosphate serves as cofactor.

It carries out the reaction 6-carboxyhexanoyl-[ACP] + L-alanine + H(+) = (8S)-8-amino-7-oxononanoate + holo-[ACP] + CO2. It functions in the pathway cofactor biosynthesis; biotin biosynthesis. Its function is as follows. Catalyzes the decarboxylative condensation of pimeloyl-[acyl-carrier protein] and L-alanine to produce 8-amino-7-oxononanoate (AON), [acyl-carrier protein], and carbon dioxide. The polypeptide is 8-amino-7-oxononanoate synthase (Acidithiobacillus ferrooxidans (strain ATCC 23270 / DSM 14882 / CIP 104768 / NCIMB 8455) (Ferrobacillus ferrooxidans (strain ATCC 23270))).